The following is a 278-amino-acid chain: Protoheme IX farnesyltransferase (278 aa).

A run of 9 helical transmembrane segments spans residues 12-32, 33-53, 83-103, 105-125, 130-150, 157-177, 204-224, 228-248, and 257-277; these read VIWL…QTVD, WSKL…SAAF, ALVY…YLLG, LPGL…TIWL, WLNI…GYAL, LPAV…IWAL, VIIS…YLAF, LLGL…SILA, and MWKM…ALVF.

It belongs to the UbiA prenyltransferase family. Protoheme IX farnesyltransferase subfamily.

The protein localises to the cell membrane. The catalysed reaction is heme b + (2E,6E)-farnesyl diphosphate + H2O = Fe(II)-heme o + diphosphate. It participates in porphyrin-containing compound metabolism; heme O biosynthesis; heme O from protoheme: step 1/1. Functionally, converts heme B (protoheme IX) to heme O by substitution of the vinyl group on carbon 2 of heme B porphyrin ring with a hydroxyethyl farnesyl side group. The sequence is that of Protoheme IX farnesyltransferase from Pyrobaculum islandicum (strain DSM 4184 / JCM 9189 / GEO3).